The sequence spans 162 residues: Ribonuclease P protein component (162 aa).

Residues Met1 to Ser63 form a disordered region. Basic and acidic residues predominate over residues Gly21–Glu38.

This sequence belongs to the RnpA family. As to quaternary structure, consists of a catalytic RNA component (M1 or rnpB) and a protein subunit.

The enzyme catalyses Endonucleolytic cleavage of RNA, removing 5'-extranucleotides from tRNA precursor.. Its function is as follows. RNaseP catalyzes the removal of the 5'-leader sequence from pre-tRNA to produce the mature 5'-terminus. It can also cleave other RNA substrates such as 4.5S RNA. The protein component plays an auxiliary but essential role in vivo by binding to the 5'-leader sequence and broadening the substrate specificity of the ribozyme. In Thermus scotoductus, this protein is Ribonuclease P protein component.